Reading from the N-terminus, the 87-residue chain is UPF0250 protein KPN78578_06520 (87 aa).

It belongs to the UPF0250 family.

This is UPF0250 protein KPN78578_06520 from Klebsiella pneumoniae subsp. pneumoniae (strain ATCC 700721 / MGH 78578).